The chain runs to 719 residues: DNA ligase (719 aa).

NAD(+) is bound by residues 42-46 (DAEYD), 91-92 (SL), and glutamate 125. The active-site N6-AMP-lysine intermediate is the lysine 127. NAD(+) is bound by residues arginine 148, glutamate 184, lysine 300, and lysine 324. The Zn(2+) site is built by cysteine 429, cysteine 432, cysteine 447, and cysteine 453. Residues 638 to 719 (TASSPIAEKI…WMRLIKGHNI (82 aa)) enclose the BRCT domain.

The protein belongs to the NAD-dependent DNA ligase family. LigA subfamily. Requires Mg(2+) as cofactor. Mn(2+) serves as cofactor.

The catalysed reaction is NAD(+) + (deoxyribonucleotide)n-3'-hydroxyl + 5'-phospho-(deoxyribonucleotide)m = (deoxyribonucleotide)n+m + AMP + beta-nicotinamide D-nucleotide.. In terms of biological role, DNA ligase that catalyzes the formation of phosphodiester linkages between 5'-phosphoryl and 3'-hydroxyl groups in double-stranded DNA using NAD as a coenzyme and as the energy source for the reaction. It is essential for DNA replication and repair of damaged DNA. This Bartonella tribocorum (strain CIP 105476 / IBS 506) protein is DNA ligase.